The sequence spans 87 residues: Large ribosomal subunit protein bL27 (87 aa).

It belongs to the bacterial ribosomal protein bL27 family.

The sequence is that of Large ribosomal subunit protein bL27 from Dechloromonas aromatica (strain RCB).